The sequence spans 269 residues: Signal recognition particle receptor subunit beta (269 aa).

The helical transmembrane segment at 35-55 threads the bilayer; that stretch reads LLSVAVALLAVLLTLVFWKFI. Residues 69–77 and 90–93 contribute to the GTP site; these read GLCDSGKTL and TQTS. Serine 110 is modified (phosphoserine). GTP is bound by residues glycine 118 and 178–181; that span reads NKQD. The residue at position 212 (threonine 212) is a Phosphothreonine. Alanine 246 is a binding site for GTP.

It belongs to the SRP receptor beta subunit family. In terms of assembly, heterodimer with SRPRA.

It is found in the endoplasmic reticulum membrane. Its function is as follows. Component of the SRP (signal recognition particle) receptor. Ensures, in conjunction with the signal recognition particle, the correct targeting of the nascent secretory proteins to the endoplasmic reticulum membrane system. May mediate the membrane association of SR. In Mus musculus (Mouse), this protein is Signal recognition particle receptor subunit beta (Srprb).